A 544-amino-acid polypeptide reads, in one-letter code: CTP synthase (544 aa).

Residues 1–267 (MSKFIFVTGG…GDLLVSRLHL (267 aa)) are amidoligase domain. Serine 13 is a binding site for CTP. Serine 13 is a binding site for UTP. 14–19 (SVGKGI) is an ATP binding site. Tyrosine 54 provides a ligand contact to L-glutamine. ATP is bound at residue aspartate 71. Aspartate 71 and glutamate 141 together coordinate Mg(2+). CTP is bound by residues 148–150 (DIE), 188–193 (KTKPTQ), and lysine 224. UTP-binding positions include 188-193 (KTKPTQ) and lysine 224. Residues 299–534 (YVELKDAYYS…INAAKKVIRD (236 aa)) enclose the Glutamine amidotransferase type-1 domain. An L-glutamine-binding site is contributed by glycine 354. Residue cysteine 381 is the Nucleophile; for glutamine hydrolysis of the active site. Residues 382–385 (LGMQ), glutamate 405, and arginine 462 each bind L-glutamine. Catalysis depends on residues histidine 507 and glutamate 509.

This sequence belongs to the CTP synthase family. In terms of assembly, homotetramer.

The catalysed reaction is UTP + L-glutamine + ATP + H2O = CTP + L-glutamate + ADP + phosphate + 2 H(+). It catalyses the reaction L-glutamine + H2O = L-glutamate + NH4(+). The enzyme catalyses UTP + NH4(+) + ATP = CTP + ADP + phosphate + 2 H(+). Its pathway is pyrimidine metabolism; CTP biosynthesis via de novo pathway; CTP from UDP: step 2/2. With respect to regulation, allosterically activated by GTP, when glutamine is the substrate; GTP has no effect on the reaction when ammonia is the substrate. The allosteric effector GTP functions by stabilizing the protein conformation that binds the tetrahedral intermediate(s) formed during glutamine hydrolysis. Inhibited by the product CTP, via allosteric rather than competitive inhibition. Functionally, catalyzes the ATP-dependent amination of UTP to CTP with either L-glutamine or ammonia as the source of nitrogen. Regulates intracellular CTP levels through interactions with the four ribonucleotide triphosphates. The sequence is that of CTP synthase from Dehalococcoides mccartyi (strain ATCC BAA-2100 / JCM 16839 / KCTC 5957 / BAV1).